Consider the following 188-residue polypeptide: Abscisic acid receptor PYL8 (188 aa).

The START-like stretch occupies residues 25-176 (HELVDNQCSS…NLKSLADISE (152 aa)). Cys32 and Cys157 are disulfide-bonded. Lys61 provides a ligand contact to abscisate. A Phosphothreonine; by CARK1 modification is found at Thr77. Residues 85 to 89 (SGLPA) carry the Gate loop motif. Residues 89–94 (ATRSTE), 116–122 (RLKNYSS), and Glu141 each bind abscisate. The short motif at 115 to 117 (HRL) is the Latch loop element.

This sequence belongs to the PYR/PYL/RCAR abscisic acid intracellular receptor family. As to quaternary structure, monomer. Homodimer. Binds ABA on one subunit only. interacts with ABI1 and HAB1, and possibly with other PP2Cs. Binds to CARs protein in an ABA-independent manner, both at the plasma membrane and in the nucleus. Interacts directly with CAR1 and CAR4. Interacts with MYB44, MYB73 and MYB77 in an ABA-independent manner. Interacts with DDA1. Interacts with CARK1 in the cytosol. Binds to ABI1 when phosphorylated by CARK1. Interacts with AIP1 in the nucleus. Post-translationally, phosphorylated by CARK1 especially in response to abscisic acid (ABA); this phosphorylation promotes its stability and inhibitory ability to ABI1. In terms of processing, ubiquitinated in DDA1- and CDD complex-dependent manner. Ubiquitination leads to its subsequent proteasomal degradation.

It is found in the cytoplasm. It localises to the cytosol. Its subcellular location is the nucleus. The protein localises to the cell membrane. Functionally, receptor for abscisic acid (ABA) required for ABA-mediated responses such as stomatal closure and germination inhibition. Inhibits the activity of group-A protein phosphatases type 2C (PP2Cs) in an ABA-independent manner but more efficiently when activated by ABA. Confers enhanced sensitivity to ABA. Can be activated by both (-)-ABA and (+)-ABA. Mediates crosstalk between ABA and auxin signaling to regulate lateral root growth. Required for lateral root growth suppression by ABA. In response to auxin, promotes lateral root growth by enhancing MYB77-dependent transcription of the auxin-responsive gene IAA19. Enhances the abilities of MYB44 and MYB73 to activate IAA19 gene. The chain is Abscisic acid receptor PYL8 from Arabidopsis thaliana (Mouse-ear cress).